A 422-amino-acid chain; its full sequence is Protein phosphatase methylesterase 1 (422 aa).

The tract at residues 1-27 (MSDMFRKSVLNKLPHLPPTRAPWADES) is disordered. Residues serine 207, aspartate 234, and histidine 371 contribute to the active site.

Belongs to the AB hydrolase superfamily.

The catalysed reaction is [phosphatase 2A protein]-C-terminal L-leucine methyl ester + H2O = [phosphatase 2A protein]-C-terminal L-leucine + methanol + H(+). Its function is as follows. Demethylates proteins that have been reversibly carboxymethylated. Demethylates the phosphatase PP2A catalytic subunit. The protein is Protein phosphatase methylesterase 1 (PPE1) of Cryptococcus neoformans var. neoformans serotype D (strain JEC21 / ATCC MYA-565) (Filobasidiella neoformans).